The primary structure comprises 156 residues: Ribonuclease pancreatic (156 aa).

Residues 1–28 form the signal peptide; sequence MALEKSLVLLPLFVLMLLVLGWVQPSLG. Residues Lys35 and Arg38 each contribute to the substrate site. His40 (proton acceptor) is an active-site residue. Residues Asn50 and Asn62 are each glycosylated (N-linked (GlcNAc...) asparagine). Disulfide bonds link Cys54/Cys112, Cys68/Cys123, Cys86/Cys138, and Cys93/Cys100. Residues 69–73 and Lys94 contribute to the substrate site; that span reads KPVNT. N-linked (GlcNAc...) asparagine glycosylation occurs at Asn104. Arg113 serves as a coordination point for substrate. The N-linked (GlcNAc...) asparagine glycan is linked to Asn116. The Proton donor role is filled by His147.

This sequence belongs to the pancreatic ribonuclease family. In terms of assembly, monomer. Interacts with and forms tight 1:1 complexes with RNH1. Dimerization of two such complexes may occur. Interaction with RNH1 inhibits this protein.

The protein localises to the secreted. It carries out the reaction an [RNA] containing cytidine + H2O = an [RNA]-3'-cytidine-3'-phosphate + a 5'-hydroxy-ribonucleotide-3'-[RNA].. It catalyses the reaction an [RNA] containing uridine + H2O = an [RNA]-3'-uridine-3'-phosphate + a 5'-hydroxy-ribonucleotide-3'-[RNA].. Functionally, endonuclease that catalyzes the cleavage of RNA on the 3' side of pyrimidine nucleotides. Acts on single-stranded and double-stranded RNA. This is Ribonuclease pancreatic (RNASE1) from Nomascus leucogenys (Northern white-cheeked gibbon).